A 435-amino-acid polypeptide reads, in one-letter code: Monodehydroascorbate reductase 3, cytosolic (435 aa).

Residues 14–17, Glu41, Arg48, Lys53, Ile96, and 147–148 each bind FAD; these read GGVA and RE. Residues 172-178, Glu196, Arg202, and Gly261 contribute to the NAD(+) site; that span reads GGYIGLE. Residue 174-178 participates in NADP(+) binding; it reads YIGLE. NADP(+) contacts are provided by Arg202 and Gly261. Asp298 lines the FAD pocket. Position 314–315 (314–315) interacts with NAD(+); sequence EH. Residue 314–315 coordinates NADP(+); the sequence is EH. Val316 serves as a coordination point for FAD. Arg320 contacts L-ascorbate. Tyr349 provides a ligand contact to FAD. Position 349 (Tyr349) interacts with NAD(+). An NADP(+)-binding site is contributed by Tyr349. Arg351 serves as a coordination point for L-ascorbate.

It belongs to the FAD-dependent oxidoreductase family. Requires FAD as cofactor.

The protein resides in the cytoplasm. The enzyme catalyses 2 monodehydro-L-ascorbate radical + NADH + H(+) = 2 L-ascorbate + NAD(+). Its function is as follows. Catalyzes the conversion of monodehydroascorbate to ascorbate, oxidizing NADH in the process. Ascorbate is a major antioxidant against reactive oxygen species (ROS) and nitric oxide (NO). Can use NADPH as electron donor, but possesses lower activity compared to NADH as electron donor. This Oryza sativa subsp. japonica (Rice) protein is Monodehydroascorbate reductase 3, cytosolic.